The following is a 318-amino-acid chain: Glutathione synthetase (318 aa).

One can recognise an ATP-grasp domain in the interval 129 to 314; that stretch reads KLAITEFPDL…VPEMFAVALE (186 aa). Position 155 to 211 (155 to 211) interacts with ATP; it reads HAAQGDVIVKPLDGMGGTGIFRLQRSEPNLNAILETLTDNGTRTIMAQRYIPEIVKG. Mg(2+)-binding residues include Glu285 and Asn287.

This sequence belongs to the prokaryotic GSH synthase family. The cofactor is Mg(2+). It depends on Mn(2+) as a cofactor.

The enzyme catalyses gamma-L-glutamyl-L-cysteine + glycine + ATP = glutathione + ADP + phosphate + H(+). The protein operates within sulfur metabolism; glutathione biosynthesis; glutathione from L-cysteine and L-glutamate: step 2/2. This chain is Glutathione synthetase, found in Bordetella bronchiseptica (strain ATCC BAA-588 / NCTC 13252 / RB50) (Alcaligenes bronchisepticus).